The primary structure comprises 187 residues: UPF0301 protein YqgE (187 aa).

This sequence belongs to the UPF0301 (AlgH) family.

This chain is UPF0301 protein YqgE, found in Shigella boydii serotype 4 (strain Sb227).